The primary structure comprises 270 residues: 3-methyl-2-oxobutanoate hydroxymethyltransferase (270 aa).

Mg(2+) contacts are provided by Asp43 and Asp82. 3-methyl-2-oxobutanoate-binding positions include 43–44, Asp82, and Lys112; that span reads DS. Glu114 is a Mg(2+) binding site. Glu179 functions as the Proton acceptor in the catalytic mechanism.

This sequence belongs to the PanB family. In terms of assembly, homodecamer; pentamer of dimers. Mg(2+) is required as a cofactor.

The protein localises to the cytoplasm. The catalysed reaction is 3-methyl-2-oxobutanoate + (6R)-5,10-methylene-5,6,7,8-tetrahydrofolate + H2O = 2-dehydropantoate + (6S)-5,6,7,8-tetrahydrofolate. It functions in the pathway cofactor biosynthesis; (R)-pantothenate biosynthesis; (R)-pantoate from 3-methyl-2-oxobutanoate: step 1/2. Catalyzes the reversible reaction in which hydroxymethyl group from 5,10-methylenetetrahydrofolate is transferred onto alpha-ketoisovalerate to form ketopantoate. The chain is 3-methyl-2-oxobutanoate hydroxymethyltransferase from Oceanobacillus iheyensis (strain DSM 14371 / CIP 107618 / JCM 11309 / KCTC 3954 / HTE831).